The primary structure comprises 484 residues: Sperm-associated antigen 8 (484 aa).

Residues 1–11 (METSESTDRSQ) show a composition bias toward basic and acidic residues. Disordered stretches follow at residues 1-32 (METSESTDRSQSRCLDLQPSSDGLGSSSDPFS), 123-221 (DLSS…SAPV), and 324-348 (LQPQSPTSSCTTQKDSYQPPKSHCQ). 2 stretches are compositionally biased toward low complexity: residues 20-32 (SSDGLGSSSDPFS) and 125-160 (SSSRGPIPGSSSGPVPGSSSSPGPDSSSDPGPSSSS). Over residues 161–195 (GPGGSPGGSGRGPGHGPGPGGGSGQGPGGGSGQGT) the composition is skewed to gly residues. The span at 324 to 339 (LQPQSPTSSCTTQKDS) shows a compositional bias: polar residues. Mn stretches follow at residues 332–345 (SCTTQKDSYQPPKS) and 384–398 (ESVTHHDYKKELVQA). The segment at 455 to 484 (PLPFEPESYSQHGEISSLACQGGGQGGGGG) is disordered. The segment covering 475 to 484 (QGGGQGGGGG) has biased composition (gly residues).

Belongs to the SPAG8 family. In terms of assembly, microtubule inner protein component of sperm flagellar doublet microtubules. Interacts with FHL5 (via second LIM domain). Interacts with RANBP9. As to expression, expressed in trachea multiciliated cells.

Its subcellular location is the cytoplasm. The protein resides in the nucleus. The protein localises to the cytoplasmic vesicle. It is found in the secretory vesicle. It localises to the acrosome. Its subcellular location is the cytoskeleton. The protein resides in the microtubule organizing center. The protein localises to the spindle. It is found in the cilium axoneme. It localises to the flagellum axoneme. Microtubule inner protein (MIP) part of the dynein-decorated doublet microtubules (DMTs) in cilia axoneme, which is required for motile cilia beating. Plays a role in spermatogenesis by enhancing the binding of CREM isoform tau to its coactivator FHL5 and increasing the FHL5-regulated transcriptional activation of CREM isoform tau. Involved in the acrosome reaction and in binding of sperm to the zona pellucida. Plays a role in regulation of the cell cycle by controlling progression through the G2/M phase, possibly by delaying the activation of CDK1 which is required for entry into mitosis. May play a role in fertility and microtubule formation through interaction with RANBP9. The protein is Sperm-associated antigen 8 (SPAG8) of Bos taurus (Bovine).